Consider the following 211-residue polypeptide: Troponin I, cardiac muscle (211 aa).

The tract at residues 1–24 (MADESSDAAGEPQPAPAPVRRRSS) is disordered. A2 bears the N-acetylalanine mark. Phosphoserine is present on residues S5 and S6. A phosphoserine; by PKA and PKD/PRKD1 mark is found at S23 and S24. Phosphotyrosine is present on Y27. Residue T32 is modified to Phosphothreonine; by STK4/MST1. The interval 33–80 (EPHAKKKSKISASRKLQLKTLMLQIAKQEMEREAEERRGEKGRVLRTR) is involved in binding TNC. Phosphoserine; by PKC/PRKCE is present on residues S43 and S45. At T52 the chain carries Phosphothreonine; by STK4/MST1. At T79 the chain carries Phosphothreonine. Residues T130 and T144 each carry the phosphothreonine; by STK4/MST1 modification. Positions 130–151 (TQKIYDLRGKFKRPTLRRVRIS) are involved in binding TNC and actin. Phosphoserine is present on residues S151, S167, and S200.

It belongs to the troponin I family. As to quaternary structure, interacts with TRIM63. Binds to actin and tropomyosin. Interacts with STK4/MST1. Post-translationally, phosphorylated at Ser-23 and Ser-24 by PRKD1; phosphorylation reduces myofilament calcium sensitivity. Phosphorylated preferentially at Thr-32. Phosphorylation by STK4/MST1 alters its binding affinity to TNNC1 (cardiac Tn-C) and TNNT2 (cardiac Tn-T). Phosphorylated at Ser-43 and Ser-45 by PRKCE; phosphorylation increases myocardium contractile dysfunction.

Its function is as follows. Troponin I is the inhibitory subunit of troponin, the thin filament regulatory complex which confers calcium-sensitivity to striated muscle actomyosin ATPase activity. This Mus musculus (Mouse) protein is Troponin I, cardiac muscle (Tnni3).